We begin with the raw amino-acid sequence, 61 residues long: Disintegrin rubistatin (61 aa).

Positions 1–61 (NPCCDAATCK…ADCPRNGLYG (61 aa)) constitute a Disintegrin domain. Cystine bridges form between Cys3/Cys26, Cys17/Cys23, Cys22/Cys47, and Cys35/Cys54. A Cell attachment site; atypical (MVD) motif is present at residues 39-41 (MVD).

It belongs to the venom metalloproteinase (M12B) family. P-II subfamily. P-IIa sub-subfamily. As to quaternary structure, monomer. As to expression, expressed by the venom gland.

The protein resides in the secreted. Recombinant disintegrin rubistatin inhibits ADP-induced platelet aggregation. In addition, it strongly induces apoptosis, and inhibits cell migration and proliferation of the human cancer cell line SK-Mel-28. The protein is Disintegrin rubistatin of Crotalus ruber ruber (Red diamond rattlesnake).